We begin with the raw amino-acid sequence, 332 residues long: Leucine carboxyl methyltransferase 1 homolog (332 aa).

S-adenosyl-L-methionine contacts are provided by residues Lys-22, Arg-57, Gly-83, Asp-107, 153–154, and Glu-180; that span reads DL.

It belongs to the methyltransferase superfamily. LCMT family.

The protein resides in the cytoplasm. The protein localises to the membrane. It catalyses the reaction [phosphatase 2A protein]-C-terminal L-leucine + S-adenosyl-L-methionine = [phosphatase 2A protein]-C-terminal L-leucine methyl ester + S-adenosyl-L-homocysteine. In terms of biological role, methylates the carboxyl group of the C-terminal leucine residue of protein phosphatase 2A (PP2A) catalytic subunits to form alpha-leucine ester residues. Involved in brassinosteroid (BR) signaling. Plays a negative role in BR signaling pathway. Functions as a positive regulator of BRI1 receptor-kinase degradation. Methylates PP2A, thus facilitating its association with activated BRI1. This leads to receptor dephosphorylation and degradation, and thus to the termination of BR signaling. May act upstream of ASK7/BIN2. Involved in methylation of PP2A during environmental stress responses. The chain is Leucine carboxyl methyltransferase 1 homolog from Arabidopsis thaliana (Mouse-ear cress).